The primary structure comprises 72 residues: UPF0346 protein EF_1680 (72 aa).

It belongs to the UPF0346 family.

In Enterococcus faecalis (strain ATCC 700802 / V583), this protein is UPF0346 protein EF_1680.